Reading from the N-terminus, the 465-residue chain is 3-isopropylmalate dehydratase large subunit (465 aa).

The [4Fe-4S] cluster site is built by Cys-347, Cys-407, and Cys-410. Residues 416-443 (DTLRPGERSASTSNRNFEGRQGPGGRTH) form a disordered region.

It belongs to the aconitase/IPM isomerase family. LeuC type 1 subfamily. Heterodimer of LeuC and LeuD. Requires [4Fe-4S] cluster as cofactor.

It catalyses the reaction (2R,3S)-3-isopropylmalate = (2S)-2-isopropylmalate. Its pathway is amino-acid biosynthesis; L-leucine biosynthesis; L-leucine from 3-methyl-2-oxobutanoate: step 2/4. Its function is as follows. Catalyzes the isomerization between 2-isopropylmalate and 3-isopropylmalate, via the formation of 2-isopropylmaleate. The chain is 3-isopropylmalate dehydratase large subunit from Frankia alni (strain DSM 45986 / CECT 9034 / ACN14a).